A 270-amino-acid polypeptide reads, in one-letter code: 3-phenylpropionate-dihydrodiol/cinnamic acid-dihydrodiol dehydrogenase (270 aa).

10–34 (FITGGGSGLGLALVERFIEEGAQVA) contacts NAD(+). Residue Ser-143 coordinates substrate. The Proton acceptor role is filled by Tyr-156.

This sequence belongs to the short-chain dehydrogenases/reductases (SDR) family.

The enzyme catalyses 3-(cis-5,6-dihydroxycyclohexa-1,3-dien-1-yl)propanoate + NAD(+) = 3-(2,3-dihydroxyphenyl)propanoate + NADH + H(+). The catalysed reaction is (2E)-3-(cis-5,6-dihydroxycyclohexa-1,3-dien-1-yl)prop-2-enoate + NAD(+) = (2E)-3-(2,3-dihydroxyphenyl)prop-2-enoate + NADH + H(+). It functions in the pathway aromatic compound metabolism; 3-phenylpropanoate degradation. In terms of biological role, converts 3-phenylpropionate-dihydrodiol (PP-dihydrodiol) and cinnamic acid-dihydrodiol (CI-dihydrodiol) into 3-(2,3-dihydroxylphenyl)propanoic acid (DHPP) and 2,3-dihydroxicinnamic acid (DHCI), respectively. The sequence is that of 3-phenylpropionate-dihydrodiol/cinnamic acid-dihydrodiol dehydrogenase from Escherichia coli (strain ATCC 8739 / DSM 1576 / NBRC 3972 / NCIMB 8545 / WDCM 00012 / Crooks).